A 235-amino-acid polypeptide reads, in one-letter code: Thiamine import ATP-binding protein ThiQ (235 aa).

The 229-residue stretch at 2 to 230 folds into the ABC transporter domain; the sequence is LKLIDITWLY…QASASALLGI (229 aa). 32 to 39 provides a ligand contact to ATP; it reads GPSGAGKS.

This sequence belongs to the ABC transporter superfamily. Thiamine importer (TC 3.A.1.19.1) family. As to quaternary structure, the complex is composed of two ATP-binding proteins (ThiQ), two transmembrane proteins (ThiP) and a solute-binding protein (ThiB).

It is found in the cell inner membrane. It catalyses the reaction thiamine(out) + ATP + H2O = thiamine(in) + ADP + phosphate + H(+). In terms of biological role, part of the ABC transporter complex ThiBPQ involved in thiamine import. Responsible for energy coupling to the transport system. This is Thiamine import ATP-binding protein ThiQ from Salmonella choleraesuis (strain SC-B67).